The chain runs to 861 residues: ToMV resistance protein Tm-2(GCR236) (861 aa).

A coiled-coil region spans residues 63–83; that stretch reads VKNLLKDIQELAGDVEDLLDD. The 227-residue stretch at 162 to 388 folds into the NB-ARC domain; it reads DDFNMLQAKL…LESMGHKVQD (227 aa). ATP is bound at residue 185–192; sequence GMPGLGKT. LRR repeat units follow at residues 225–248, 305–327, 388–411, 449–472, 510–536, 585–608, 609–631, 652–680, 689–710, 712–735, 736–758, 784–810, and 811–835; these read LDIAKQIGLTEQKMKENLEDNLRS, LHALQPLESEKSFELFTKKIFNF, DGCAKVLALSYNDLPIASRPCFLY, LAEDVLNDLVSRNLIQLAKRTYNG, VARLRRITFYSDNVMIEFFRSNPKLEK, MTCLRYLRLEGNICGKLPNSIVKL, TRLETIDIDRRSLIQPPSGVWES, ISSFYPNIYSLHPNNLQTLMWIPDKFFEP, LRKLGILGVSNSTVKMLSIFSP, LKALEVLKLSFSSDPSEQIKLSSY, PHIAKLHLNVNRTMALNSQSFPP, LRKLKMFICKYNEEKMDLSGEANGYSF, and PQLEVLHIHSPNGLSEVTCTDDVSM.

Belongs to the disease resistance NB-LRR family. (Microbial infection) Interacts with tobamoviruses mouvement protein at the plasma membrane; this interaction triggers defense responses leading to programmed cell death. In terms of assembly, binds to HSP90 proteins; this interaction seems required for defense responses toward tobamoviruses.

Its subcellular location is the cell membrane. Inhibitor of viral mouvements which confers resistance to some tobamoviruses including tomato mosaic virus (ToMV) (e.g. isolates L, W3 and SL-1) and tobacco mosaic virus (TMV), but not to resistance-breaking isolates (e.g. B7, LT1, LII, Ltbl, ToMV2, and ToMV1-2) ToMV and tomato brown rugose fruit virus (ToBRFV). Elicits a hypersensitive reaction in response to avirulent (Avr) movement proteins from resistance inducing tobamoviruses (e.g. ToMV and TMV) strains, thus leading to programmed cell death. In Solanum lycopersicum (Tomato), this protein is ToMV resistance protein Tm-2(GCR236).